Here is a 343-residue protein sequence, read N- to C-terminus: Oxygen-dependent coproporphyrinogen-III oxidase (343 aa).

Ser99 contacts substrate. Residues His103 and His113 each coordinate a divalent metal cation. Residue His113 is the Proton donor of the active site. 115–117 (NYR) is a binding site for substrate. The a divalent metal cation site is built by His147 and His177. The interval 267 to 302 (YVEFNLVWDRGTIFGLQTNGRTESILMSLPPLARWE) is important for dimerization.

The protein belongs to the aerobic coproporphyrinogen-III oxidase family. As to quaternary structure, homodimer. It depends on a divalent metal cation as a cofactor.

The protein resides in the cytoplasm. It catalyses the reaction coproporphyrinogen III + O2 + 2 H(+) = protoporphyrinogen IX + 2 CO2 + 2 H2O. Its pathway is porphyrin-containing compound metabolism; protoporphyrin-IX biosynthesis; protoporphyrinogen-IX from coproporphyrinogen-III (O2 route): step 1/1. Its function is as follows. Involved in the heme and chlorophyll biosynthesis. Catalyzes the aerobic oxidative decarboxylation of propionate groups of rings A and B of coproporphyrinogen-III to yield the vinyl groups in protoporphyrinogen-IX. The protein is Oxygen-dependent coproporphyrinogen-III oxidase of Prochlorococcus marinus (strain SARG / CCMP1375 / SS120).